The chain runs to 397 residues: L-cysteine desulfidase (397 aa).

Catalysis depends on Cys-23, which acts as the Proton acceptor. Residues Cys-288, Cys-330, and Cys-337 each coordinate [4Fe-4S] cluster.

It belongs to the L-cysteine desulfidase family. Homotrimer. Requires [4Fe-4S] cluster as cofactor.

The enzyme catalyses L-cysteine + H2O = hydrogen sulfide + pyruvate + NH4(+) + H(+). In terms of biological role, catalyzes the cleavage of L-cysteine to form 2-aminoprop-2-enoate and sulfide. The former then spontaneously hydrolyzes to pyruvate and NH(3). May be responsible for the production of sulfide required for the biosynthesis of iron-sulfur centers in this archaea. The polypeptide is L-cysteine desulfidase (Methanococcus maripaludis (strain C5 / ATCC BAA-1333)).